Consider the following 404-residue polypeptide: Epoxide hydrolase 1 (404 aa).

The helical transmembrane segment at 74–96 threads the bilayer; it reads ILVRLLQFYYFVKFSAILFLGFA. The 250-residue stretch at 140-389 folds into the AB hydrolase-1 domain; it reads PLMLFIHGYP…ASHWVQQDEP (250 aa). Aspartate 215 serves as the catalytic Nucleophile. Catalysis depends on tyrosine 327, which acts as the Proton donor. The active-site Proton acceptor is histidine 382.

It belongs to the AB hydrolase superfamily. Epoxide hydrolase family.

It localises to the membrane. It catalyses the reaction an epoxide + H2O = an ethanediol. The catalysed reaction is 8,9-epoxy-(5Z,11Z,14Z)-eicosatrienoate + H2O = 8,9-dihydroxy-(5Z,11Z,14Z)-eicosatrienoate. It carries out the reaction 11,12-epoxy-(5Z,8Z,14Z)-eicosatrienoate + H2O = 11,12-dihydroxy-(5Z,8Z,14Z)-eicosatrienoate. The enzyme catalyses 14,15-epoxy-(5Z,8Z,11Z)-eicosatrienoate + H2O = 14,15-dihydroxy-(5Z,8Z,11Z)-eicosatrienoate. It catalyses the reaction 12,13-epoxy-(9Z)-octadecenoate + H2O = 12,13-dihydroxy-(9Z)-octadecenoate. The catalysed reaction is 9,10-epoxy-(12Z)-octadecenoate + H2O = 9,10-dihydroxy-(12Z)-octadecenoate. The protein operates within lipid metabolism. Its function is as follows. Catalyzes the hydrolysis of epoxide-containing fatty acids. Active against epoxyeicosatrienoic acids (EETs) including 8,9-epoxy-(5Z,11Z,14Z)-eicosatrienoate (8,9-EET), 11,12-epoxy-(5Z,8Z,14Z)-eicosatrienoate (11,12-EET) and 14,15-epoxy-(5Z,8Z,11Z)-eicosatrienoate (14,15-EET) and the linoleic acid metabolites 12,13-epoxy-(9Z)-octadecenoate (12,13-EpOME) and 9,10-epoxy-(12Z)-octadecenoate (9,10-EpOME). These epoxides function as lipid signaling molecules, the enzyme can deplete the supply of the epoxide signal by transforming them into diol species that are more readily eliminated through excretion. In Caenorhabditis elegans, this protein is Epoxide hydrolase 1.